The following is a 793-amino-acid chain: Probable alpha-fucosidase A (793 aa).

Positions 1 to 20 are cleaved as a signal peptide; sequence MLISGSSAALCALALPFAAA. Residues Asn30, Asn83, Asn100, Asn104, Asn123, Asn179, Asn199, Asn234, Asn323, Asn597, Asn622, Asn660, and Asn757 are each glycosylated (N-linked (GlcNAc...) asparagine).

Belongs to the glycosyl hydrolase 95 family.

It localises to the secreted. It catalyses the reaction an alpha-L-fucoside + H2O = L-fucose + an alcohol. Its function is as follows. Alpha-fucosidase involved in degradation of fucosylated xyloglucans. Hydrolyzes alpha-1,2-linked fucose. This chain is Probable alpha-fucosidase A (afcA), found in Aspergillus niger (strain ATCC MYA-4892 / CBS 513.88 / FGSC A1513).